A 229-amino-acid chain; its full sequence is Potassium/proton antiporter CemA (229 aa).

A run of 4 helical transmembrane segments spans residues 7 to 27 (FNPL…SFSF), 107 to 127 (ILNF…YILG), 154 to 174 (ILLL…ELMI), and 189 to 209 (IISG…KYLI).

This sequence belongs to the CemA family.

It localises to the plastid. The protein localises to the chloroplast inner membrane. It catalyses the reaction K(+)(in) + H(+)(out) = K(+)(out) + H(+)(in). Its function is as follows. Contributes to K(+)/H(+) antiport activity by supporting proton efflux to control proton extrusion and homeostasis in chloroplasts in a light-dependent manner to modulate photosynthesis. Prevents excessive induction of non-photochemical quenching (NPQ) under continuous-light conditions. Indirectly promotes efficient inorganic carbon uptake into chloroplasts. This Ranunculus macranthus (Large buttercup) protein is Potassium/proton antiporter CemA.